The chain runs to 54 residues: Sec-independent protein translocase protein TatA (54 aa).

Residues 1 to 21 (MGMSFSHLLIVLLIIFVLFGA) form a helical membrane-spanning segment.

This sequence belongs to the TatA/E family. In terms of assembly, the Tat system comprises two distinct complexes: a TatABC complex, containing multiple copies of TatA, TatB and TatC subunits, and a separate TatA complex, containing only TatA subunits. Substrates initially bind to the TatABC complex, which probably triggers association of the separate TatA complex to form the active translocon.

The protein resides in the cell inner membrane. Functionally, part of the twin-arginine translocation (Tat) system that transports large folded proteins containing a characteristic twin-arginine motif in their signal peptide across membranes. TatA could form the protein-conducting channel of the Tat system. The sequence is that of Sec-independent protein translocase protein TatA from Rickettsia prowazekii (strain Madrid E).